Here is a 1883-residue protein sequence, read N- to C-terminus: Lysophospholipase NTE1 (1883 aa).

The Cytoplasmic portion of the chain corresponds to 1-75 (MSQVPVASPA…LLRVVLASLN (75 aa)). A helical membrane pass occupies residues 76-96 (LIRILATFSTITVPSLVYAIL). The Lumenal segment spans residues 97–103 (HYSLTLQ). A helical transmembrane segment spans residues 104–124 (LNFPSLALLFLTSLISAFIWL). Over 125-1883 (RYRHLNKYER…AGISARRNSI (1759 aa)) the chain is Cytoplasmic. 6 disordered regions span residues 284 to 327 (HLAP…FNPP), 355 to 410 (ERLG…LYHA), 618 to 693 (SQRS…MVGP), 716 to 764 (SAQP…RKGS), 921 to 1069 (EEDR…ATNS), and 1084 to 1108 (LHQQ…GKRS). The segment covering 311–327 (NNATAPTSPYSSAFNPP) has biased composition (polar residues). The segment covering 372–383 (ARTASSGTASAT) has biased composition (low complexity). Residues 650 to 668 (PSLTTSSKQSNQKPTSSRI) are compositionally biased toward polar residues. Residues 863 to 1158 (AGHG…RRPI) and 1166 to 1285 (RLLS…IARR) each bind a nucleoside 3',5'-cyclic phosphate. The segment covering 936 to 948 (TDASSGSSRQNRP) has biased composition (polar residues). Residues 964–974 (LLDERNLREAD) show a composition bias toward basic and acidic residues. Composition is skewed to polar residues over residues 988-998 (ISSNGDGNSGS) and 1084-1100 (LHQQ…QSSQ). Positions 1544 to 1708 (LVLGGGGARG…VDNLPVTVML (165 aa)) constitute a PNPLA domain. Positions 1548-1553 (GGGARG) match the GXGXXG motif. Residues 1575-1579 (GTSIG) carry the GXSXG motif. Ser-1577 acts as the Nucleophile in catalysis. Asp-1695 serves as the catalytic Proton acceptor. The DGA/G motif lies at 1695–1697 (DGG). The disordered stretch occupies residues 1852–1883 (DESGVGGGVRKIRKKRRRTRRKAGISARRNSI). Positions 1861-1874 (RKIRKKRRRTRRKA) are enriched in basic residues.

This sequence belongs to the NTE family.

Its subcellular location is the endoplasmic reticulum membrane. The catalysed reaction is a 1-acyl-sn-glycero-3-phosphocholine + H2O = sn-glycerol 3-phosphocholine + a fatty acid + H(+). Its activity is regulated as follows. Inhibited by organophosphorus esters. Functionally, intracellular phospholipase B that catalyzes the double deacylation of phosphatidylcholine (PC) to glycerophosphocholine (GroPCho). Plays an important role in membrane lipid homeostasis. Responsible for the rapid PC turnover in response to inositol, elevated temperatures, or when choline is present in the growth medium. The polypeptide is Lysophospholipase NTE1 (NTE1) (Mycosarcoma maydis (Corn smut fungus)).